The primary structure comprises 294 residues: ATP phosphoribosyltransferase (294 aa).

It belongs to the ATP phosphoribosyltransferase family. Long subfamily. Mg(2+) serves as cofactor.

It localises to the cytoplasm. It catalyses the reaction 1-(5-phospho-beta-D-ribosyl)-ATP + diphosphate = 5-phospho-alpha-D-ribose 1-diphosphate + ATP. Its pathway is amino-acid biosynthesis; L-histidine biosynthesis; L-histidine from 5-phospho-alpha-D-ribose 1-diphosphate: step 1/9. Feedback inhibited by histidine. Catalyzes the condensation of ATP and 5-phosphoribose 1-diphosphate to form N'-(5'-phosphoribosyl)-ATP (PR-ATP). Has a crucial role in the pathway because the rate of histidine biosynthesis seems to be controlled primarily by regulation of HisG enzymatic activity. This Maricaulis maris (strain MCS10) (Caulobacter maris) protein is ATP phosphoribosyltransferase.